Consider the following 144-residue polypeptide: Mediator of RNA polymerase II transcription subunit 21 (144 aa).

Belongs to the Mediator complex subunit 21 family. In terms of assembly, component of the Mediator complex, which is composed of MED1, MED4, MED6, MED7, MED8, MED9, MED10, MED11, MED12, MED13, MED13L, MED14, MED15, MED16, MED17, MED18, MED19, MED20, MED21, MED22, MED23, MED24, MED25, MED26, MED27, MED29, MED30, MED31, CCNC, CDK8 and CDC2L6/CDK11. The MED12, MED13, CCNC and CDK8 subunits form a distinct module termed the CDK8 module. Mediator containing the CDK8 module is less active than Mediator lacking this module in supporting transcriptional activation. Individual preparations of the Mediator complex lacking one or more distinct subunits have been variously termed ARC, CRSP, DRIP, PC2, SMCC and TRAP. Interacts with PPARG. Interacts with THRA in a ligand-dependent fashion.

It localises to the nucleus. Component of the Mediator complex, a coactivator involved in the regulated transcription of nearly all RNA polymerase II-dependent genes. Mediator functions as a bridge to convey information from gene-specific regulatory proteins to the basal RNA polymerase II transcription machinery. Mediator is recruited to promoters by direct interactions with regulatory proteins and serves as a scaffold for the assembly of a functional preinitiation complex with RNA polymerase II and the general transcription factors. In Bos taurus (Bovine), this protein is Mediator of RNA polymerase II transcription subunit 21 (MED21).